We begin with the raw amino-acid sequence, 403 residues long: Enoyl-[acyl-carrier-protein] reductase [NADH] (403 aa).

NAD(+)-binding positions include 49-54 (GASSGY), 75-76 (FE), 112-113 (DA), and 141-142 (LA). Tyr227 provides a ligand contact to substrate. Tyr237 functions as the Proton donor in the catalytic mechanism. Residues Lys246 and 276–278 (VVT) contribute to the NAD(+) site.

Belongs to the TER reductase family. As to quaternary structure, monomer.

The enzyme catalyses a 2,3-saturated acyl-[ACP] + NAD(+) = a (2E)-enoyl-[ACP] + NADH + H(+). Its pathway is lipid metabolism; fatty acid biosynthesis. In terms of biological role, involved in the final reduction of the elongation cycle of fatty acid synthesis (FAS II). Catalyzes the reduction of a carbon-carbon double bond in an enoyl moiety that is covalently linked to an acyl carrier protein (ACP). This is Enoyl-[acyl-carrier-protein] reductase [NADH] from Pseudomonas putida (strain GB-1).